Here is a 296-residue protein sequence, read N- to C-terminus: Ribosomal protein L11 methyltransferase (296 aa).

Residues Thr147, Gly168, Asp190, and Asn232 each contribute to the S-adenosyl-L-methionine site.

It belongs to the methyltransferase superfamily. PrmA family.

It is found in the cytoplasm. The catalysed reaction is L-lysyl-[protein] + 3 S-adenosyl-L-methionine = N(6),N(6),N(6)-trimethyl-L-lysyl-[protein] + 3 S-adenosyl-L-homocysteine + 3 H(+). Its function is as follows. Methylates ribosomal protein L11. The sequence is that of Ribosomal protein L11 methyltransferase from Marinomonas sp. (strain MWYL1).